A 316-amino-acid chain; its full sequence is N-acetyl-gamma-glutamyl-phosphate reductase (316 aa).

Cysteine 136 is a catalytic residue.

Belongs to the NAGSA dehydrogenase family. Type 1 subfamily.

The protein localises to the cytoplasm. The catalysed reaction is N-acetyl-L-glutamate 5-semialdehyde + phosphate + NADP(+) = N-acetyl-L-glutamyl 5-phosphate + NADPH + H(+). The protein operates within amino-acid biosynthesis; L-arginine biosynthesis; N(2)-acetyl-L-ornithine from L-glutamate: step 3/4. Catalyzes the NADPH-dependent reduction of N-acetyl-5-glutamyl phosphate to yield N-acetyl-L-glutamate 5-semialdehyde. In Xanthomonas campestris pv. campestris (strain ATCC 33913 / DSM 3586 / NCPPB 528 / LMG 568 / P 25), this protein is N-acetyl-gamma-glutamyl-phosphate reductase.